The following is a 318-amino-acid chain: NLP effector protein 9 (318 aa).

An N-terminal signal peptide occupies residues 1–19; that stretch reads MRLFAFLWSSVAFLSTVQA. The segment covering 24–35 has biased composition (low complexity); the sequence is TASQTQDDSSTP. Disordered regions lie at residues 24–43 and 50–93; these read TASQ…PDKY and LRTK…PAPT. The span at 55 to 65 shows a compositional bias: polar residues; the sequence is PMATPNRTIMP. The N-linked (GlcNAc...) asparagine glycan is linked to N60. A compositionally biased stretch (pro residues) spans 73-93; that stretch reads PEPPTPEPTYLPTLSPTPAPT. The Conserved undecapeptide motif I motif lies at 185–195; the sequence is AIMYSWYFPKD. A Hepta-peptide GHRHDWE motif II motif is present at residues 202-208; the sequence is GHRHDWE.

Belongs to the Necrosis inducing protein (NPP1) family.

It is found in the secreted. Functionally, secreted effector that contributes to virulence during infection by P.capsici. Induces distinct chlorosis at 3 days after inoculation of host C.annuum leaves, and all the chlorotic areas gradually turn brown and become moderately necrotic at 7 days after inoculation. Caused only small necrotic areas at 7 days after non-host N.benthamiana leaves infection. In Phytophthora capsici, this protein is NLP effector protein 9.